A 154-amino-acid polypeptide reads, in one-letter code: uncharacterized protein (154 aa).

4 helical membrane-spanning segments follow: residues 20–42 (FRLFLAFNFFVYGLAKVVIGQFG), 62–84 (FFGYSHVYELFIGFGEILAAVLL), 91–109 (ALGAVIFMPIIVNIVLINY), and 113–132 (IGVQDLSTILMVMCLILLWM).

The protein localises to the cell membrane. This is an uncharacterized protein from Bacillus subtilis (strain 168).